An 89-amino-acid polypeptide reads, in one-letter code: Small ribosomal subunit protein uS14B (89 aa).

A disordered region spans residues 38–61; the sequence is KLPKDAHPSRLKLRDQTDGRPRGY. The span at 39–58 shows a compositional bias: basic and acidic residues; it reads LPKDAHPSRLKLRDQTDGRP.

Belongs to the universal ribosomal protein uS14 family. As to quaternary structure, part of the 30S ribosomal subunit. Contacts proteins S3 and S10.

In terms of biological role, binds 16S rRNA, required for the assembly of 30S particles and may also be responsible for determining the conformation of the 16S rRNA at the A site. This Enterococcus faecalis (strain ATCC 700802 / V583) protein is Small ribosomal subunit protein uS14B.